The chain runs to 259 residues: L-arginine-binding protein (259 aa).

Residues 1–21 (MKKLALLGALALSVLSLPTFA) form the signal peptide.

Belongs to the bacterial solute-binding protein 3 family.

Its subcellular location is the periplasm. In terms of biological role, binds L-arginine with high affinity. Shows no measurable affinity for L-ornithine. This chain is L-arginine-binding protein, found in Pseudomonas aeruginosa (strain ATCC 15692 / DSM 22644 / CIP 104116 / JCM 14847 / LMG 12228 / 1C / PRS 101 / PAO1).